The chain runs to 490 residues: MTGLLIAGTTSDAGKTAVTTGLCRALARRGLKVAPYKAQNMSNNSMVCAGDDGGVEIGRAQWVQALAARATPEAAMNPVLLKPGSDRRSHVVLMGRPWGHVSSSDWLEGRRALAAAAHAAYDDLAGRYDVIVAEGAGSPTEINLRAGDYVNLGLARHAGLPTVVVGDIDRGGVFAAFFGTVALLSPEDQALIAGFVVNKFRGDPALLAPGLRDLERLTGRRVYGTLPWHPDLWLDSEDALELQGRRSARPGARRVAVVRLPRISNFTDVDAFGLEPDLDVVFASHPSALADADLVVLPGTRSTIADLAWLRSRGLDRAVLAHAAAGRPVLGICGGFQMLGRVIRDPHGVEGGTSEADGLGLLDIETDFVADKALRLPEGQWEATSASGYEIHHGRITPGPGGDEFPGGVRCGPVFGTMWHGAFEGDALRARFLTETLGVPASGASFPKAREDRIDLLGDLVEEHLDVDALLRLAEHAPPQGLPFLPPGSP.

Positions 252–428 (ARRVAVVRLP…WHGAFEGDAL (177 aa)) constitute a GATase cobBQ-type domain. Cysteine 333 functions as the Nucleophile in the catalytic mechanism. The active site involves histidine 420.

It belongs to the CobB/CobQ family. CobQ subfamily.

It functions in the pathway cofactor biosynthesis; adenosylcobalamin biosynthesis. In terms of biological role, catalyzes amidations at positions B, D, E, and G on adenosylcobyrinic A,C-diamide. NH(2) groups are provided by glutamine, and one molecule of ATP is hydrogenolyzed for each amidation. The sequence is that of Cobyric acid synthase from Mycolicibacterium vanbaalenii (strain DSM 7251 / JCM 13017 / BCRC 16820 / KCTC 9966 / NRRL B-24157 / PYR-1) (Mycobacterium vanbaalenii).